We begin with the raw amino-acid sequence, 702 residues long: Polyribonucleotide nucleotidyltransferase (702 aa).

2 residues coordinate Mg(2+): D484 and D490. Residues 551 to 610 (PHIESFKIAVEKIGALIGPGGKTVKSLSDQYRVTINTDSDGTVTVSGRDAQSVFDAKVAV) form the KH domain. In terms of domain architecture, S1 motif spans 620–688 (GRVYQGVVKR…RMGRLNLSYI (69 aa)).

Belongs to the polyribonucleotide nucleotidyltransferase family. The cofactor is Mg(2+).

Its subcellular location is the cytoplasm. It carries out the reaction RNA(n+1) + phosphate = RNA(n) + a ribonucleoside 5'-diphosphate. In terms of biological role, involved in mRNA degradation. Catalyzes the phosphorolysis of single-stranded polyribonucleotides processively in the 3'- to 5'-direction. The chain is Polyribonucleotide nucleotidyltransferase from Treponema pallidum (strain Nichols).